The sequence spans 475 residues: RNA pseudouridine synthase 3, mitochondrial (475 aa).

A mitochondrion-targeting transit peptide spans 1–15; the sequence is MLCRRRRVGAAVRWL. The disordered stretch occupies residues 40–74; the sequence is RLGKPKPGPRPRQLLSLPPFPGGGDGDPLPGRKAA. Positions 90–160 constitute an S4 RNA-binding domain; that stretch reads ADVPQEVVQA…GEIKKRYETI (71 aa). Residue Asp230 is part of the active site.

This sequence belongs to the pseudouridine synthase RluA family.

The protein localises to the mitochondrion. The enzyme catalyses a uridine in RNA = a pseudouridine in RNA. This chain is RNA pseudouridine synthase 3, mitochondrial, found in Oryza sativa subsp. japonica (Rice).